Reading from the N-terminus, the 523-residue chain is Glycerate kinase (523 aa).

A Phosphoserine modification is found at Ser-60. Lys-200 carries the N6-acetyllysine modification.

Belongs to the glycerate kinase type-2 family. Expressed in the hippocampus, callus, brain, cerebellum, renal cortex interstitial cells, epithelium of interlobular bile duct and skeletal muscle.

Its subcellular location is the cytoplasm. The enzyme catalyses (R)-glycerate + ATP = (2R)-3-phosphoglycerate + ADP + H(+). The protein is Glycerate kinase (Glyctk) of Mus musculus (Mouse).